A 448-amino-acid polypeptide reads, in one-letter code: Phosphoglucosamine mutase (448 aa).

Ser101 (phosphoserine intermediate) is an active-site residue. Mg(2+) is bound by residues Ser101, Asp242, Asp244, and Asp246. At Ser101 the chain carries Phosphoserine.

It belongs to the phosphohexose mutase family. It depends on Mg(2+) as a cofactor. Post-translationally, activated by phosphorylation.

It carries out the reaction alpha-D-glucosamine 1-phosphate = D-glucosamine 6-phosphate. Its function is as follows. Catalyzes the conversion of glucosamine-6-phosphate to glucosamine-1-phosphate. The protein is Phosphoglucosamine mutase of Afipia carboxidovorans (strain ATCC 49405 / DSM 1227 / KCTC 32145 / OM5) (Oligotropha carboxidovorans).